A 361-amino-acid chain; its full sequence is D-alanine--D-alanine ligase (361 aa).

Positions 144 to 350 (KLCVSEAGIA…FPELCDRLLQ (207 aa)) constitute an ATP-grasp domain. Residue 177-232 (PETLIYPVFVKPAHLGSSVGISKVSVQGELPEALAHACNLDTKVLIEQAMHGKEIE) participates in ATP binding. Positions 303, 317, and 319 each coordinate Mg(2+).

Belongs to the D-alanine--D-alanine ligase family. Mg(2+) is required as a cofactor. It depends on Mn(2+) as a cofactor.

The protein resides in the cytoplasm. The enzyme catalyses 2 D-alanine + ATP = D-alanyl-D-alanine + ADP + phosphate + H(+). It functions in the pathway cell wall biogenesis; peptidoglycan biosynthesis. Functionally, cell wall formation. This is D-alanine--D-alanine ligase from Chlorobium phaeovibrioides (strain DSM 265 / 1930) (Prosthecochloris vibrioformis (strain DSM 265)).